Reading from the N-terminus, the 66-residue chain is Hemicalcin (66 aa).

The first 21 residues, 1–21, serve as a signal peptide directing secretion; the sequence is MRASLFIVIFVVSFITISCLS. Positions 22–33 are excised as a propeptide; it reads TDDEEARWIEKR. Cystine bridges form between cysteine 36/cysteine 50, cysteine 43/cysteine 54, and cysteine 49/cysteine 65. The essential for stimulation of [3H]ryanodine binding to RYR1 stretch occupies residues 55-57; sequence KRR.

Belongs to the scorpion calcin family. Expressed by the venom gland.

The protein localises to the secreted. This toxin stabilizes ryanodine receptor 1 (RyR1) opening in a long-lasting subconductance state (20% and 38% of the full conductance state have been found). It promotes an increase in the opening probability at intermediate concentration. Furthermore, it triggers calcium release from sarcoplasmic vesicles (68 nM are enough to induce a sharp release, and 45% of the total calcium is released after toxin (100 nM) addition) probably by acting as a cell-penetrating peptide (CPP). In addition, it has been shown to dose-dependently stimulate ryanodine binding to RyR1 (EC(50)=6.9-71 nM). It also augments the bell-shaped calcium-[3H]ryanodine binding curve that is maximal at about 10 uM calcium concentration. It binds a different site as ryanodine. It acts synergistically with caffeine. In vivo, intracerebroventricular injection into mice induces neurotoxic symptoms, followed by death. This chain is Hemicalcin, found in Hemiscorpius lepturus (Scorpion).